A 321-amino-acid chain; its full sequence is Thioredoxin reductase (321 aa).

Residues 11 to 14, 40 to 41, Q45, N54, C145, D288, and 295 to 297 each bind FAD; these read SGPA, TA, and RQA. Cysteines 142 and 145 form a disulfide.

This sequence belongs to the class-II pyridine nucleotide-disulfide oxidoreductase family. As to quaternary structure, homodimer. FAD is required as a cofactor.

The protein resides in the cytoplasm. It catalyses the reaction [thioredoxin]-dithiol + NADP(+) = [thioredoxin]-disulfide + NADPH + H(+). This Debaryomyces hansenii (strain ATCC 36239 / CBS 767 / BCRC 21394 / JCM 1990 / NBRC 0083 / IGC 2968) (Yeast) protein is Thioredoxin reductase (TRR1).